A 100-amino-acid chain; its full sequence is UPF0213 protein YhbQ (100 aa).

Positions 2–77 constitute a GIY-YIG domain; sequence TPWFLYLIRT…KQLTKRQKER (76 aa).

It belongs to the UPF0213 family.

This chain is UPF0213 protein YhbQ, found in Escherichia coli (strain K12 / MC4100 / BW2952).